A 392-amino-acid chain; its full sequence is Iripin-4 (392 aa).

An N-terminal signal peptide occupies residues 1-16; it reads MRSLATFMSLLTICWG. Asparagine 104, asparagine 130, and asparagine 265 each carry an N-linked (GlcNAc...) asparagine glycan.

The protein belongs to the serpin family. Female salivary gland.

It is found in the secreted. Its function is as follows. Serpin with unknown function. Weakly inhibits human granzyme B (GZMB). Acts as a substrate for porcine elastase. The chain is Iripin-4 from Ixodes ricinus (Common tick).